The primary structure comprises 250 residues: tRNA pseudouridine synthase A (250 aa).

Catalysis depends on aspartate 53, which acts as the Nucleophile. Tyrosine 111 contacts substrate.

The protein belongs to the tRNA pseudouridine synthase TruA family. As to quaternary structure, homodimer.

It catalyses the reaction uridine(38/39/40) in tRNA = pseudouridine(38/39/40) in tRNA. Functionally, formation of pseudouridine at positions 38, 39 and 40 in the anticodon stem and loop of transfer RNAs. The sequence is that of tRNA pseudouridine synthase A from Streptococcus uberis (strain ATCC BAA-854 / 0140J).